Here is a 364-residue protein sequence, read N- to C-terminus: Phosphoserine aminotransferase (364 aa).

Residue R42 coordinates L-glutamate. Pyridoxal 5'-phosphate contacts are provided by residues 76–77 (GR), W102, T156, D175, and Q198. K199 is modified (N6-(pyridoxal phosphate)lysine). 240 to 241 (NT) provides a ligand contact to pyridoxal 5'-phosphate.

It belongs to the class-V pyridoxal-phosphate-dependent aminotransferase family. SerC subfamily. In terms of assembly, homodimer. It depends on pyridoxal 5'-phosphate as a cofactor.

It is found in the cytoplasm. It catalyses the reaction O-phospho-L-serine + 2-oxoglutarate = 3-phosphooxypyruvate + L-glutamate. It carries out the reaction 4-(phosphooxy)-L-threonine + 2-oxoglutarate = (R)-3-hydroxy-2-oxo-4-phosphooxybutanoate + L-glutamate. It functions in the pathway amino-acid biosynthesis; L-serine biosynthesis; L-serine from 3-phospho-D-glycerate: step 2/3. It participates in cofactor biosynthesis; pyridoxine 5'-phosphate biosynthesis; pyridoxine 5'-phosphate from D-erythrose 4-phosphate: step 3/5. In terms of biological role, catalyzes the reversible conversion of 3-phosphohydroxypyruvate to phosphoserine and of 3-hydroxy-2-oxo-4-phosphonooxybutanoate to phosphohydroxythreonine. The sequence is that of Phosphoserine aminotransferase from Shewanella woodyi (strain ATCC 51908 / MS32).